Consider the following 554-residue polypeptide: Undecaprenyl phosphate-alpha-4-amino-4-deoxy-L-arabinose arabinosyl transferase (554 aa).

11 consecutive transmembrane segments (helical) span residues 4–24 (LKGS…LLPI), 87–107 (FGSI…ATLL), 115–135 (FLAA…SYAV), 178–198 (FMTK…PIVI), 206–226 (LIIF…PWAL), 262–282 (YLPI…AALL), 293–313 (ELFF…VAKG), 315–335 (LPTY…AYAT), 352–372 (INLI…MGWV), 384–404 (QKVI…FATM), and 410–430 (HWHW…YLIP).

The protein belongs to the glycosyltransferase 83 family.

It localises to the cell inner membrane. The enzyme catalyses 4-amino-4-deoxy-alpha-L-arabinopyranosyl di-trans,octa-cis-undecaprenyl phosphate + lipid IVA = lipid IIA + di-trans,octa-cis-undecaprenyl phosphate.. The protein operates within lipopolysaccharide metabolism; 4-amino-4-deoxy-beta-L-arabinose-lipid A biosynthesis. Its function is as follows. Catalyzes the transfer of the L-Ara4N moiety of the glycolipid undecaprenyl phosphate-alpha-L-Ara4N to lipid A. The modified arabinose is attached to lipid A and is required for resistance to polymyxin and cationic antimicrobial peptides. The sequence is that of Undecaprenyl phosphate-alpha-4-amino-4-deoxy-L-arabinose arabinosyl transferase from Yersinia enterocolitica serotype O:8 / biotype 1B (strain NCTC 13174 / 8081).